Consider the following 233-residue polypeptide: DNA repair protein RecO (233 aa).

The protein belongs to the RecO family.

Its function is as follows. Involved in DNA repair and RecF pathway recombination. This is DNA repair protein RecO from Pseudomonas aeruginosa (strain UCBPP-PA14).